The sequence spans 252 residues: Hydroxyacylglutathione hydrolase (252 aa).

The Zn(2+) site is built by H52, H54, D56, H57, H107, D128, and H166.

Belongs to the metallo-beta-lactamase superfamily. Glyoxalase II family. As to quaternary structure, monomer. Requires Zn(2+) as cofactor.

It carries out the reaction an S-(2-hydroxyacyl)glutathione + H2O = a 2-hydroxy carboxylate + glutathione + H(+). It functions in the pathway secondary metabolite metabolism; methylglyoxal degradation; (R)-lactate from methylglyoxal: step 2/2. Its function is as follows. Thiolesterase that catalyzes the hydrolysis of S-D-lactoyl-glutathione to form glutathione and D-lactic acid. This Neisseria meningitidis serogroup C (strain 053442) protein is Hydroxyacylglutathione hydrolase.